A 261-amino-acid chain; its full sequence is tRNA pseudouridine synthase A (261 aa).

Asp52 acts as the Nucleophile in catalysis. Residue Tyr110 participates in substrate binding.

Belongs to the tRNA pseudouridine synthase TruA family. Homodimer.

The catalysed reaction is uridine(38/39/40) in tRNA = pseudouridine(38/39/40) in tRNA. Functionally, formation of pseudouridine at positions 38, 39 and 40 in the anticodon stem and loop of transfer RNAs. This is tRNA pseudouridine synthase A from Blochmanniella pennsylvanica (strain BPEN).